We begin with the raw amino-acid sequence, 294 residues long: BOI-related E3 ubiquitin-protein ligase 1 (294 aa).

The segment at 168–204 is WRD domain; it reads LQERVKNLYVENQIWRDLAQTNEATANNLRSNLEQVL. Residues 183–212 adopt a coiled-coil conformation; sequence RDLAQTNEATANNLRSNLEQVLAQVDDLDA. An RING-type zinc finger spans residues 244–281; that stretch reads CKRCGELTASVLVLPCRHLCLCTVCGSSALLRTCPVCD.

As to quaternary structure, interacts with the DELLA proteins GAI, RGA, RGL1, RGL2 and RGL3.

It carries out the reaction S-ubiquitinyl-[E2 ubiquitin-conjugating enzyme]-L-cysteine + [acceptor protein]-L-lysine = [E2 ubiquitin-conjugating enzyme]-L-cysteine + N(6)-ubiquitinyl-[acceptor protein]-L-lysine.. Its pathway is protein degradation; proteasomal ubiquitin-dependent pathway. Its function is as follows. E3 ubiquitin-protein ligase involved in regulation of abiotic stress responses. Not involved in ubiquitination of MYB108/BOS1. Has no effect on the stability of the DELLA proteins. This Arabidopsis thaliana (Mouse-ear cress) protein is BOI-related E3 ubiquitin-protein ligase 1 (BRG1).